We begin with the raw amino-acid sequence, 46 residues long: Spectrin alpha chain, non-erythrocytic 1 (46 aa).

Spectrin repeat units lie at residues 1–5 (AQLAD), 7–14 (FHLQQFFR), 15–20 (SQLLGS), 21–26 (AHEVQR), 27–35 (LAQFVEHWK), and 39–46 (DLFLTFAK).

Belongs to the spectrin family. As to quaternary structure, associates with the gamma-tubulin complex in brain, but not in kidney, liver, sperm, or uterus. Like erythrocyte spectrin, the spectrin-like proteins are capable of forming dimers which can further associate to tetramers. Interacts with isoform 1 of ACP1. Interacts with CALM and EMD. Interacts (via C-terminal spectrin repeats) with TRPC4. Identified in a complex with ACTN4, CASK, IQGAP1, MAGI2, NPHS1 and SPTBN1. Interacts with CLN3; this interaction regulates the fodrin localization at the plasma membrane.

Its subcellular location is the cytoplasm. It localises to the cytoskeleton. The protein resides in the cell cortex. In terms of biological role, fodrin, which seems to be involved in secretion, interacts with calmodulin in a calcium-dependent manner and is thus candidate for the calcium-dependent movement of the cytoskeleton at the membrane. The sequence is that of Spectrin alpha chain, non-erythrocytic 1 (SPTAN1) from Capra hircus (Goat).